Consider the following 77-residue polypeptide: UPF0349 protein lmo2392 (77 aa).

This sequence belongs to the UPF0349 family.

In Listeria monocytogenes serovar 1/2a (strain ATCC BAA-679 / EGD-e), this protein is UPF0349 protein lmo2392.